Reading from the N-terminus, the 131-residue chain is Phosphoribosyl-AMP cyclohydrolase (131 aa).

Mg(2+) is bound at residue D74. Position 75 (C75) interacts with Zn(2+). Mg(2+) is bound by residues D76 and D78. C91 and C98 together coordinate Zn(2+).

Belongs to the PRA-CH family. In terms of assembly, homodimer. It depends on Mg(2+) as a cofactor. The cofactor is Zn(2+).

Its subcellular location is the cytoplasm. The enzyme catalyses 1-(5-phospho-beta-D-ribosyl)-5'-AMP + H2O = 1-(5-phospho-beta-D-ribosyl)-5-[(5-phospho-beta-D-ribosylamino)methylideneamino]imidazole-4-carboxamide. It functions in the pathway amino-acid biosynthesis; L-histidine biosynthesis; L-histidine from 5-phospho-alpha-D-ribose 1-diphosphate: step 3/9. Catalyzes the hydrolysis of the adenine ring of phosphoribosyl-AMP. This is Phosphoribosyl-AMP cyclohydrolase from Bradyrhizobium sp. (strain BTAi1 / ATCC BAA-1182).